The chain runs to 104 residues: Guanyl-specific ribonuclease Ap1 (104 aa).

Intrachain disulfides connect C2/C10 and C6/C103. H40 is a catalytic residue. E58 functions as the Proton acceptor in the catalytic mechanism. H92 serves as the catalytic Proton donor.

Belongs to the ribonuclease N1/T1 family.

The protein resides in the secreted. The catalysed reaction is [RNA] containing guanosine + H2O = an [RNA fragment]-3'-guanosine-3'-phosphate + a 5'-hydroxy-ribonucleotide-3'-[RNA fragment].. This chain is Guanyl-specific ribonuclease Ap1, found in Aspergillus pallidus.